Reading from the N-terminus, the 919-residue chain is Phosphoenolpyruvate carboxylase (919 aa).

Residues H138 and K579 contribute to the active site.

This sequence belongs to the PEPCase type 1 family. Mg(2+) serves as cofactor.

The catalysed reaction is oxaloacetate + phosphate = phosphoenolpyruvate + hydrogencarbonate. In terms of biological role, forms oxaloacetate, a four-carbon dicarboxylic acid source for the tricarboxylic acid cycle. This chain is Phosphoenolpyruvate carboxylase, found in Corynebacterium glutamicum (Brevibacterium saccharolyticum).